The primary structure comprises 224 residues: Ribose-5-phosphate isomerase A (224 aa).

Substrate is bound by residues 26-29, 82-85, and 95-98; these read TGST, DGAD, and KGGG. E104 functions as the Proton acceptor in the catalytic mechanism. Residue K122 participates in substrate binding.

This sequence belongs to the ribose 5-phosphate isomerase family. In terms of assembly, homodimer.

The enzyme catalyses aldehydo-D-ribose 5-phosphate = D-ribulose 5-phosphate. Its pathway is carbohydrate degradation; pentose phosphate pathway; D-ribose 5-phosphate from D-ribulose 5-phosphate (non-oxidative stage): step 1/1. Its function is as follows. Catalyzes the reversible conversion of ribose-5-phosphate to ribulose 5-phosphate. The protein is Ribose-5-phosphate isomerase A of Lactococcus lactis subsp. cremoris (strain SK11).